A 433-amino-acid polypeptide reads, in one-letter code: Tol-Pal system protein TolB (433 aa).

The N-terminal stretch at M1–A21 is a signal peptide.

The protein belongs to the TolB family. As to quaternary structure, the Tol-Pal system is composed of five core proteins: the inner membrane proteins TolA, TolQ and TolR, the periplasmic protein TolB and the outer membrane protein Pal. They form a network linking the inner and outer membranes and the peptidoglycan layer.

The protein localises to the periplasm. Its function is as follows. Part of the Tol-Pal system, which plays a role in outer membrane invagination during cell division and is important for maintaining outer membrane integrity. This is Tol-Pal system protein TolB from Pseudomonas putida (strain ATCC 47054 / DSM 6125 / CFBP 8728 / NCIMB 11950 / KT2440).